A 486-amino-acid polypeptide reads, in one-letter code: Galactose-3-O-sulfotransferase 4 (486 aa).

Residues 1–18 (MGPLSPARTLRLWGPRSL) are Cytoplasmic-facing. Residues 19–39 (GVALGVFMTIGFALQLLGGPF) traverse the membrane as a helical; Signal-anchor for type II membrane protein segment. Over 40 to 486 (QRRLPGLQLR…PLKTSRPLSP (447 aa)) the chain is Lumenal. Residue asparagine 374 is glycosylated (N-linked (GlcNAc...) asparagine).

This sequence belongs to the galactose-3-O-sulfotransferase family. The cofactor is Mn(2+). Expressed mainly in placenta, thymus, testis, ovary, spinal cord, trachea and adrenal gland and at low levels in brain, lung, spleen, prostate, small intestine, colon, stomach thyroid and lymph node.

The protein localises to the golgi apparatus. The protein resides in the golgi stack membrane. It functions in the pathway protein modification; carbohydrate sulfation. Its function is as follows. Catalyzes the transfer of sulfate to beta-1,3-linked galactose residues in O-linked glycoproteins. Good substrates include asialofetuin, Gal-beta-1,3-GalNAc and Gal-beta-1,3 (GlcNAc-beta-1,6)GalNAc. This Homo sapiens (Human) protein is Galactose-3-O-sulfotransferase 4 (GAL3ST4).